Reading from the N-terminus, the 210-residue chain is MAIYKSLTEADLLAFSTGLIAGVDEVGRGPLVGDVVTAAVILDPNKPISGLNDSKKLSEKRREALFDEICDKALCYHVGRASPAEIDELNILHATMLAMQRAVAGLNIAPELVLVDGNRSPIFVAHNGAELTSHSIIKGDGLIASISAASIIAKVTRDREMDVLDAAYPQYGFAKHKGYPTKAHFEAIAEHGVFDQYRKSFKPVKALLGL.

In terms of domain architecture, RNase H type-2 spans 18–210; the sequence is GLIAGVDEVG…FKPVKALLGL (193 aa). A divalent metal cation contacts are provided by D24, E25, and D116.

This sequence belongs to the RNase HII family. The cofactor is Mn(2+). Mg(2+) serves as cofactor.

The protein localises to the cytoplasm. The catalysed reaction is Endonucleolytic cleavage to 5'-phosphomonoester.. Functionally, endonuclease that specifically degrades the RNA of RNA-DNA hybrids. In Shewanella baltica (strain OS155 / ATCC BAA-1091), this protein is Ribonuclease HII.